A 316-amino-acid polypeptide reads, in one-letter code: 4-diphosphocytidyl-2-C-methyl-D-erythritol kinase (316 aa).

Lys-32 is an active-site residue. 126–136 contributes to the ATP binding site; that stretch reads PVGAGLGGGSA. Asp-168 is an active-site residue.

It belongs to the GHMP kinase family. IspE subfamily.

The catalysed reaction is 4-CDP-2-C-methyl-D-erythritol + ATP = 4-CDP-2-C-methyl-D-erythritol 2-phosphate + ADP + H(+). Its pathway is isoprenoid biosynthesis; isopentenyl diphosphate biosynthesis via DXP pathway; isopentenyl diphosphate from 1-deoxy-D-xylulose 5-phosphate: step 3/6. In terms of biological role, catalyzes the phosphorylation of the position 2 hydroxy group of 4-diphosphocytidyl-2C-methyl-D-erythritol. The polypeptide is 4-diphosphocytidyl-2-C-methyl-D-erythritol kinase (Bifidobacterium longum subsp. infantis (strain ATCC 15697 / DSM 20088 / JCM 1222 / NCTC 11817 / S12)).